The sequence spans 359 residues: Epoxide hydrolase 4 (359 aa).

The helical; Signal-anchor for type II membrane protein transmembrane segment at 15-35 (ALLYWSLVYGYCGLCASVHLL) threads the bilayer. The region spanning 92-337 (PLMLLLHGFP…ILSEGSHWLQ (246 aa)) is the AB hydrolase-1 domain. The active-site Nucleophile is the Asp-167. Tyr-279 (proton donor) is an active-site residue. His-334 acts as the Proton acceptor in catalysis.

It belongs to the AB hydrolase superfamily. Epoxide hydrolase family.

It localises to the membrane. The chain is Epoxide hydrolase 4 (Ephx4) from Mus musculus (Mouse).